The following is a 24-amino-acid chain: Malate dehydrogenase (24 aa).

An NAD(+)-binding site is contributed by 11-17; it reads GAAGQIG.

This sequence belongs to the LDH/MDH superfamily. MDH type 2 family.

The enzyme catalyses (S)-malate + NAD(+) = oxaloacetate + NADH + H(+). In terms of biological role, catalyzes the reversible oxidation of malate to oxaloacetate. The polypeptide is Malate dehydrogenase (mdh) (Planomonospora venezuelensis).